The following is a 407-amino-acid chain: uncharacterized protein (407 aa).

Residues 10-37 adopt a coiled-coil conformation; it reads DKLEQLANDVVTELTDMENKYKDLHVEL.

This is an uncharacterized protein from Bacillus subtilis (strain 168).